A 151-amino-acid chain; its full sequence is UPF0208 membrane protein ECA3038 (151 aa).

Helical transmembrane passes span 46–66 (FGIRIMPPLAVFTLTWQIALG) and 69–89 (LGPAIATALFACSLPLQGLWW).

The protein belongs to the UPF0208 family.

It is found in the cell inner membrane. This Pectobacterium atrosepticum (strain SCRI 1043 / ATCC BAA-672) (Erwinia carotovora subsp. atroseptica) protein is UPF0208 membrane protein ECA3038.